The chain runs to 197 residues: ADP-ribosylation factor 1 (197 aa).

The N-myristoyl glycine moiety is linked to residue G2. Residues 24-31 (GLDAAGKT), 67-71 (DVGGQ), and 126-129 (NKQD) contribute to the GTP site.

The protein belongs to the small GTPase superfamily. Arf family.

The protein localises to the golgi apparatus. It catalyses the reaction GTP + H2O = GDP + phosphate + H(+). Its function is as follows. GTP-binding protein involved in protein trafficking; may modulate vesicle budding and uncoating within the Golgi apparatus. In Solanum tuberosum (Potato), this protein is ADP-ribosylation factor 1.